The following is a 176-amino-acid chain: Nudix hydrolase 18, mitochondrial (176 aa).

A mitochondrion-targeting transit peptide spans 1 to 21 (MVCLVSRTGRQSQRYNKGRRQ). Positions 22 to 153 (VVGCIPYRLK…WMKEALDVLV (132 aa)) constitute a Nudix hydrolase domain. Positions 60–81 (GGWELDESVEEAASRESLEEAG) match the Nudix box motif. 2 residues coordinate Mg(2+): Glu-75 and Glu-79.

Belongs to the Nudix hydrolase family. Mg(2+) is required as a cofactor. Mn(2+) serves as cofactor. As to expression, expressed in roots, stems and inflorescences.

Its subcellular location is the mitochondrion. Functionally, probably mediates the hydrolysis of some nucleoside diphosphate derivatives. In Arabidopsis thaliana (Mouse-ear cress), this protein is Nudix hydrolase 18, mitochondrial (NUDT18).